The sequence spans 175 residues: GTP-dependent dephospho-CoA kinase (175 aa).

GTP contacts are provided by Asp48, Val49, Val50, Asp66, and Glu124.

The protein belongs to the GTP-dependent DPCK family.

It catalyses the reaction 3'-dephospho-CoA + GTP = GDP + CoA + H(+). It participates in cofactor biosynthesis; coenzyme A biosynthesis. In terms of biological role, catalyzes the GTP-dependent phosphorylation of the 3'-hydroxyl group of dephosphocoenzyme A to form coenzyme A (CoA). The polypeptide is GTP-dependent dephospho-CoA kinase (Thermofilum pendens (strain DSM 2475 / Hrk 5)).